A 102-amino-acid polypeptide reads, in one-letter code: Large ribosomal subunit protein uL24 (102 aa).

This sequence belongs to the universal ribosomal protein uL24 family. In terms of assembly, part of the 50S ribosomal subunit.

Its function is as follows. One of two assembly initiator proteins, it binds directly to the 5'-end of the 23S rRNA, where it nucleates assembly of the 50S subunit. Functionally, one of the proteins that surrounds the polypeptide exit tunnel on the outside of the subunit. In Rhizobium johnstonii (strain DSM 114642 / LMG 32736 / 3841) (Rhizobium leguminosarum bv. viciae), this protein is Large ribosomal subunit protein uL24.